A 342-amino-acid chain; its full sequence is Delta(6)-protoilludene synthase 8 (342 aa).

Asp-81 serves as a coordination point for Mg(2+). The DDXXD motif motif lies at 93–97 (RDMVD). Residues Asn-217, Ser-221, and Glu-225 each contribute to the Mg(2+) site. Positions 217-225 (NDLVSYNRE) match the NSE/DTE motif motif. (2E,6E)-farnesyl diphosphate contacts are provided by Arg-305 and Tyr-306.

Belongs to the terpene synthase family. Mg(2+) serves as cofactor.

The catalysed reaction is (2E,6E)-farnesyl diphosphate = Delta(6)-protoilludene + diphosphate. Terpene cyclase that catalyzes the cyclization of farnesyl diphosphate (FPP) to delta(6)-protoilludene. The protein is Delta(6)-protoilludene synthase 8 of Postia placenta (strain ATCC 44394 / Madison 698-R) (Brown rot fungus).